Reading from the N-terminus, the 192-residue chain is Superoxide dismutase [Fe] (192 aa).

Residues His27, His74, Asp157, and His161 each contribute to the Fe cation site.

This sequence belongs to the iron/manganese superoxide dismutase family. In terms of assembly, homodimer. Fe cation serves as cofactor.

The catalysed reaction is 2 superoxide + 2 H(+) = H2O2 + O2. Its function is as follows. Destroys superoxide anion radicals which are normally produced within the cells and which are toxic to biological systems. In Legionella pneumophila subsp. pneumophila (strain Philadelphia 1 / ATCC 33152 / DSM 7513), this protein is Superoxide dismutase [Fe] (sodB).